The primary structure comprises 318 residues: Guanidinopropionase (318 aa).

Positions 126, 148, 150, 152, 240, and 242 each coordinate Mn(2+).

This sequence belongs to the arginase family. Agmatinase subfamily. As to quaternary structure, homohexamer. It depends on Mn(2+) as a cofactor.

The catalysed reaction is 3-guanidinopropanoate + H2O = urea + beta-alanine. Functionally, catalyzes the hydrolysis of 3-guanidinopropanoate to beta-alanine and urea. Possesses low activity against 4-guanidinobutanoate. Has no activity against arginine and agmatine. This chain is Guanidinopropionase (gpuA), found in Pseudomonas aeruginosa (strain ATCC 15692 / DSM 22644 / CIP 104116 / JCM 14847 / LMG 12228 / 1C / PRS 101 / PAO1).